A 429-amino-acid chain; its full sequence is Probable beta-1,3-galactosyl-O-glycosyl-glycoprotein beta-1,6-N-acetylglucosaminyltransferase 7 (429 aa).

The Cytoplasmic segment spans residues 1–8 (MSQLRATK). Residues 9–25 (PGILVCAAIGIFVFLYL) form a helical; Signal-anchor for type II membrane protein membrane-spanning segment. Over 26–429 (RNPTSEDPEE…ESHLNRRLNP (404 aa)) the chain is Extracellular. 4 disulfides stabilise this stretch: Cys-53–Cys-205, Cys-139–Cys-354, Cys-160–Cys-187, and Cys-363–Cys-394. Residue Asn-87 is glycosylated (N-linked (GlcNAc...) asparagine). An N-linked (GlcNAc...) asparagine glycan is attached at Asn-272.

Belongs to the glycosyltransferase 14 family.

Its subcellular location is the golgi apparatus membrane. It participates in protein modification; protein glycosylation. In terms of biological role, probable glycosyltransferase. In Sus scrofa (Pig), this protein is Probable beta-1,3-galactosyl-O-glycosyl-glycoprotein beta-1,6-N-acetylglucosaminyltransferase 7.